Consider the following 680-residue polypeptide: DNA-directed RNA polymerase subunit beta' (680 aa).

Residues C69, C71, C87, and C90 each coordinate Zn(2+). D489, D491, and D493 together coordinate Mg(2+).

Belongs to the RNA polymerase beta' chain family. RpoC1 subfamily. As to quaternary structure, in plastids the minimal PEP RNA polymerase catalytic core is composed of four subunits: alpha, beta, beta', and beta''. When a (nuclear-encoded) sigma factor is associated with the core the holoenzyme is formed, which can initiate transcription. Mg(2+) is required as a cofactor. It depends on Zn(2+) as a cofactor.

Its subcellular location is the plastid. It is found in the chloroplast. It carries out the reaction RNA(n) + a ribonucleoside 5'-triphosphate = RNA(n+1) + diphosphate. Functionally, DNA-dependent RNA polymerase catalyzes the transcription of DNA into RNA using the four ribonucleoside triphosphates as substrates. This is DNA-directed RNA polymerase subunit beta' from Nandina domestica (Heavenly bamboo).